Consider the following 270-residue polypeptide: Phosphatidylglycerol--prolipoprotein diacylglyceryl transferase (270 aa).

Transmembrane regions (helical) follow at residues 19–39, 53–73, 92–112, and 117–137; these read FPVY…LWLA, FVDL…AYYV, QGGL…IIYA, and ISFW…QAIG. An a 1,2-diacyl-sn-glycero-3-phospho-(1'-sn-glycerol)-binding site is contributed by R138. The next 3 membrane-spanning stretches (helical) occupy residues 178–198, 206–226, and 236–256; these read HPTF…LLLL, GELF…VEEL, and LRIA…FIIV.

Belongs to the Lgt family.

Its subcellular location is the cell membrane. The enzyme catalyses L-cysteinyl-[prolipoprotein] + a 1,2-diacyl-sn-glycero-3-phospho-(1'-sn-glycerol) = an S-1,2-diacyl-sn-glyceryl-L-cysteinyl-[prolipoprotein] + sn-glycerol 1-phosphate + H(+). It participates in protein modification; lipoprotein biosynthesis (diacylglyceryl transfer). In terms of biological role, catalyzes the transfer of the diacylglyceryl group from phosphatidylglycerol to the sulfhydryl group of the N-terminal cysteine of a prolipoprotein, the first step in the formation of mature lipoproteins. The protein is Phosphatidylglycerol--prolipoprotein diacylglyceryl transferase of Bacillus cytotoxicus (strain DSM 22905 / CIP 110041 / 391-98 / NVH 391-98).